The following is a 118-amino-acid chain: UPF0295 protein BcerKBAB4_0454 (118 aa).

2 helical membrane passes run 12 to 32 (IRTF…LGVF) and 43 to 63 (FMMV…WIGM).

Belongs to the UPF0295 family.

The protein localises to the cell membrane. The protein is UPF0295 protein BcerKBAB4_0454 of Bacillus mycoides (strain KBAB4) (Bacillus weihenstephanensis).